A 200-amino-acid polypeptide reads, in one-letter code: Inner membrane-spanning protein YciB (200 aa).

The next 6 helical transmembrane spans lie at 7–27, 32–52, 56–76, 93–113, 126–146, and 153–173; these read HPLFKLATELGPLIVFFFVNA, FAATGAFMVAIIAALIASYVV, IPLMALVTAVVVIVFGTLTLV, LFAAVLGGGLVFNRSFIAIMF, ILTFRWALFFAGMAVLNEIIW, and FWVGFKAFGVLPLTMIFAIAQ.

It belongs to the YciB family.

The protein resides in the cell inner membrane. Functionally, plays a role in cell envelope biogenesis, maintenance of cell envelope integrity and membrane homeostasis. This Bradyrhizobium sp. (strain ORS 278) protein is Inner membrane-spanning protein YciB.